The primary structure comprises 370 residues: Histidinol-phosphate aminotransferase (370 aa).

The residue at position 223 (Lys223) is an N6-(pyridoxal phosphate)lysine.

Belongs to the class-II pyridoxal-phosphate-dependent aminotransferase family. Histidinol-phosphate aminotransferase subfamily. In terms of assembly, homodimer. Requires pyridoxal 5'-phosphate as cofactor.

It carries out the reaction L-histidinol phosphate + 2-oxoglutarate = 3-(imidazol-4-yl)-2-oxopropyl phosphate + L-glutamate. It participates in amino-acid biosynthesis; L-histidine biosynthesis; L-histidine from 5-phospho-alpha-D-ribose 1-diphosphate: step 7/9. The polypeptide is Histidinol-phosphate aminotransferase (Methylobacterium nodulans (strain LMG 21967 / CNCM I-2342 / ORS 2060)).